The sequence spans 1196 residues: DNA-directed RNA polymerase subunit beta (1196 aa).

The protein belongs to the RNA polymerase beta chain family. In terms of assembly, the RNAP catalytic core consists of 2 alpha, 1 beta, 1 beta' and 1 omega subunit. When a sigma factor is associated with the core the holoenzyme is formed, which can initiate transcription.

The enzyme catalyses RNA(n) + a ribonucleoside 5'-triphosphate = RNA(n+1) + diphosphate. Functionally, DNA-dependent RNA polymerase catalyzes the transcription of DNA into RNA using the four ribonucleoside triphosphates as substrates. This chain is DNA-directed RNA polymerase subunit beta, found in Lactococcus lactis subsp. cremoris (strain MG1363).